The chain runs to 68 residues: DLITNSYTRGKPRHVTSWRNLRTRDVCKKSPGKCIHNGCFCEQDKPQGNCCDSGGCTVKWWCPGTKGD.

Residues 1–23 (DLITNSYTRGKPRHVTSWRNLRT) constitute a propeptide that is removed on maturation.

In terms of processing, contains 4 disulfide bonds. Expressed by the venom duct.

Its subcellular location is the secreted. This chain is Conotoxin Cal12.1p1, found in Californiconus californicus (California cone).